A 343-amino-acid polypeptide reads, in one-letter code: Dihydroorotase (343 aa).

Zn(2+)-binding residues include H14 and H16. Substrate-binding positions include 16–18 and N42; that span reads HVR. Zn(2+)-binding residues include K99, H136, and H174. Residue K99 is modified to N6-carboxylysine. Substrate is bound at residue H136. Residue L219 participates in substrate binding. Residue D247 participates in Zn(2+) binding. D247 is a catalytic residue. 2 residues coordinate substrate: H251 and A263.

Belongs to the metallo-dependent hydrolases superfamily. DHOase family. Class II DHOase subfamily. As to quaternary structure, homodimer. Zn(2+) serves as cofactor.

It catalyses the reaction (S)-dihydroorotate + H2O = N-carbamoyl-L-aspartate + H(+). It participates in pyrimidine metabolism; UMP biosynthesis via de novo pathway; (S)-dihydroorotate from bicarbonate: step 3/3. In terms of biological role, catalyzes the reversible cyclization of carbamoyl aspartate to dihydroorotate. This chain is Dihydroorotase, found in Variovorax paradoxus (strain S110).